Here is a 594-residue protein sequence, read N- to C-terminus: Arginine--tRNA ligase (594 aa).

The short motif at 133 to 143 is the 'HIGH' region element; that stretch reads ANPTGPMNIVS.

This sequence belongs to the class-I aminoacyl-tRNA synthetase family. As to quaternary structure, monomer.

It is found in the cytoplasm. It carries out the reaction tRNA(Arg) + L-arginine + ATP = L-arginyl-tRNA(Arg) + AMP + diphosphate. This is Arginine--tRNA ligase from Leptospira biflexa serovar Patoc (strain Patoc 1 / Ames).